Consider the following 400-residue polypeptide: Na(+)/H(+) antiporter NhaA (400 aa).

The next 12 helical transmembrane spans lie at 26-46 (AGGI…NSPL), 71-91 (LIHW…GMEV), 107-127 (IFPA…YWFI), 137-157 (GWAI…ALLS), 166-186 (IFLL…IALF), 189-209 (HGLS…LILL), 212-232 (FKVS…ASVL), 233-253 (KSGV…PLKG), 273-293 (FVIL…GIDV), 299-319 (PLLL…IFGF), 340-360 (IFAV…LASL), and 373-393 (LSRL…YLFL).

This sequence belongs to the NhaA Na(+)/H(+) (TC 2.A.33) antiporter family.

It localises to the cell inner membrane. The catalysed reaction is Na(+)(in) + 2 H(+)(out) = Na(+)(out) + 2 H(+)(in). Functionally, na(+)/H(+) antiporter that extrudes sodium in exchange for external protons. In Haemophilus influenzae (strain 86-028NP), this protein is Na(+)/H(+) antiporter NhaA.